A 704-amino-acid polypeptide reads, in one-letter code: Zinc finger protein MSN2 (704 aa).

Residues 84 to 246 are disordered; it reads PSTTDNSLHL…SISNSNSNST (163 aa). A compositionally biased stretch (basic and acidic residues) spans 91–112; it reads LHLKADSNKNRDARTIENDSEI. Positions 113 to 133 are enriched in polar residues; the sequence is KSTNNASGSGANQYTTLTSPY. Residues 141-166 are compositionally biased toward low complexity; it reads NMNNPLQSPSPSSVPQNPTINPPINT. Composition is skewed to polar residues over residues 167 to 193 and 204 to 220; these read ASNETNLSPQTSNGNETLISPRAQQHT and NGANSNLFIDTNPNNLN. A compositionally biased stretch (low complexity) spans 228 to 246; the sequence is NSDTNSYSNSISNSNSNST. Residues 261–269 carry the 9aaTAD motif; it reads SMLDDYVSS. 2 positions are modified to phosphoserine: Ser288 and Ser304. Positions 418 to 437 are disordered; that stretch reads NRVQHKQLTSSHNNSSTNMK. The segment covering 426–437 has biased composition (polar residues); the sequence is TSSHNNSSTNMK. A phosphoserine mark is found at Ser451 and Ser582. The segment at 592-634 is disordered; it reads LTNQQNNISSSSVNSTGNGAGVTKERRPSYRRKSMTPSRRSSV. Low complexity predominate over residues 593–608; sequence TNQQNNISSSSVNSTG. Ser633 is modified (phosphoserine). 2 C2H2-type zinc fingers span residues 647 to 665 and 676 to 698; these read FHCHICPKSFKRSEHLKRH and FACHICDKKFSRSDNLSQHIKTH.

In terms of assembly, interacts with WHI2.

The protein localises to the cytoplasm. The protein resides in the nucleus. Positive transcriptional factor that acts as a component of the stress responsive system. Recognizes and binds to the stress response element (STRE) which is involved in the response to various forms of stress (heat, oxidative, osmotic, etc.). Involved in the regulation of the CTT1, DDR2, HSP12 genes. May be regulated via WHI2-PSR1 complex phosphatase activity. The protein is Zinc finger protein MSN2 (MSN2) of Saccharomyces cerevisiae (strain ATCC 204508 / S288c) (Baker's yeast).